The sequence spans 173 residues: Crossover junction endodeoxyribonuclease RuvC (173 aa).

Active-site residues include Asp-8, Glu-67, and Asp-139. Mg(2+) contacts are provided by Asp-8, Glu-67, and Asp-139.

This sequence belongs to the RuvC family. As to quaternary structure, homodimer which binds Holliday junction (HJ) DNA. The HJ becomes 2-fold symmetrical on binding to RuvC with unstacked arms; it has a different conformation from HJ DNA in complex with RuvA. In the full resolvosome a probable DNA-RuvA(4)-RuvB(12)-RuvC(2) complex forms which resolves the HJ. Mg(2+) serves as cofactor.

The protein localises to the cytoplasm. It carries out the reaction Endonucleolytic cleavage at a junction such as a reciprocal single-stranded crossover between two homologous DNA duplexes (Holliday junction).. In terms of biological role, the RuvA-RuvB-RuvC complex processes Holliday junction (HJ) DNA during genetic recombination and DNA repair. Endonuclease that resolves HJ intermediates. Cleaves cruciform DNA by making single-stranded nicks across the HJ at symmetrical positions within the homologous arms, yielding a 5'-phosphate and a 3'-hydroxyl group; requires a central core of homology in the junction. The consensus cleavage sequence is 5'-(A/T)TT(C/G)-3'. Cleavage occurs on the 3'-side of the TT dinucleotide at the point of strand exchange. HJ branch migration catalyzed by RuvA-RuvB allows RuvC to scan DNA until it finds its consensus sequence, where it cleaves and resolves the cruciform DNA. The sequence is that of Crossover junction endodeoxyribonuclease RuvC from Shewanella loihica (strain ATCC BAA-1088 / PV-4).